Reading from the N-terminus, the 124-residue chain is Large ribosomal subunit protein bL21 (124 aa).

Belongs to the bacterial ribosomal protein bL21 family. Part of the 50S ribosomal subunit. Contacts protein L20.

Functionally, this protein binds to 23S rRNA in the presence of protein L20. This Sinorhizobium medicae (strain WSM419) (Ensifer medicae) protein is Large ribosomal subunit protein bL21.